The chain runs to 731 residues: Nucleolar GTP-binding protein 2 (731 aa).

Residue methionine 1 is modified to N-acetylmethionine. The interval 1 to 33 (MVKPKYKGRSTINPSKASTNPDRVQGAGGQNMR) is disordered. Polar residues predominate over residues 10–22 (STINPSKASTNPD). In terms of domain architecture, CP-type G spans 207-368 (WGELYKVIDS…LIDCPGVVYP (162 aa)). GTP is bound by residues 317 to 324 (GYPNVGKS) and 361 to 365 (DCPGV). The tract at residues 481–502 (VVPEAAQNNPGEEVTETAGEGS) is disordered. Serine 504 carries the post-translational modification Phosphoserine. The segment covering 555–589 (LEEELESFSDEEEEEQEQQRDDAEESSSEPEEENV) has biased composition (acidic residues). 2 disordered regions span residues 555–594 (LEEELESFSDEEEEEQEQQRDDAEESSSEPEEENVGNDTK) and 630–731 (EKIF…RQKQ). 2 stretches are compositionally biased toward basic and acidic residues: residues 630–652 (EKIFAKPEEQRKTLEEDVDDRAP) and 662–671 (QREEEQEHSN). Basic residues-rich tracts occupy residues 681–695 (ERRRAVRQQRPKKVG) and 721–731 (KHKRKKFRQKQ).

The protein belongs to the TRAFAC class YlqF/YawG GTPase family. NOG2 subfamily. In terms of assembly, interacts with LYAR and RPL23A. Interacts with the nuclear importin-beta receptor and, at a lower extent, with importin-alpha. Widely expressed, with the highest expression level in testis.

The protein localises to the nucleus. It localises to the nucleolus. GTPase that associates with pre-60S ribosomal subunits in the nucleolus and is required for their nuclear export and maturation. May promote cell proliferation possibly by increasing p53/TP53 protein levels, and consequently those of its downstream product CDKN1A/p21, and decreasing RPL23A protein levels. The protein is Nucleolar GTP-binding protein 2 (GNL2) of Homo sapiens (Human).